Reading from the N-terminus, the 638-residue chain is Threonine--tRNA ligase (638 aa).

The region spanning Met1–Thr61 is the TGS domain. Residues Asp242–Pro533 form a catalytic region. Residues Cys333, His384, and His510 each coordinate Zn(2+).

The protein belongs to the class-II aminoacyl-tRNA synthetase family. As to quaternary structure, homodimer. Zn(2+) is required as a cofactor.

The protein resides in the cytoplasm. It carries out the reaction tRNA(Thr) + L-threonine + ATP = L-threonyl-tRNA(Thr) + AMP + diphosphate + H(+). Its function is as follows. Catalyzes the attachment of threonine to tRNA(Thr) in a two-step reaction: L-threonine is first activated by ATP to form Thr-AMP and then transferred to the acceptor end of tRNA(Thr). Also edits incorrectly charged L-seryl-tRNA(Thr). The chain is Threonine--tRNA ligase from Methylococcus capsulatus (strain ATCC 33009 / NCIMB 11132 / Bath).